Here is a 265-residue protein sequence, read N- to C-terminus: Putative 2-amino-3,7-dideoxy-D-threo-hept-6-ulosonate synthase 2 (265 aa).

D27 acts as the Proton acceptor in catalysis. 1-deoxy-D-threo-hexo-2,5-diulose 6-phosphate-binding positions include 27 to 31 and 147 to 149; these read DHGVS and YPR. Residue Y147 is the Proton donor of the active site. K177 functions as the Schiff-base intermediate with substrate in the catalytic mechanism. Residues 202-203 and 230-231 contribute to the 1-deoxy-D-threo-hexo-2,5-diulose 6-phosphate site; these read GG and GR.

It belongs to the DeoC/FbaB aldolase family. ADHS subfamily. Homodecamer.

It catalyses the reaction 1-deoxy-D-threo-hexo-2,5-diulose 6-phosphate + L-aspartate 4-semialdehyde = 2,3-dioxopropyl phosphate + 2-amino-2,3,7-trideoxy-D-lyxo-hept-6-ulosonate. Its function is as follows. Catalyzes a transaldol reaction between 6-deoxy-5-ketofructose 1-phosphate (DKFP) and L-aspartate semialdehyde (ASA) with an elimination of hydroxypyruvaldehyde phosphate to yield 2-amino-3,7-dideoxy-D-threo-hept-6-ulosonate (ADH). Plays a key role in an alternative pathway of the biosynthesis of 3-dehydroquinate (DHQ), which is involved in the canonical pathway for the biosynthesis of aromatic amino acids. The sequence is that of Putative 2-amino-3,7-dideoxy-D-threo-hept-6-ulosonate synthase 2 from Archaeoglobus fulgidus (strain ATCC 49558 / DSM 4304 / JCM 9628 / NBRC 100126 / VC-16).